The sequence spans 59 residues: Insertion element IS986 uncharacterized 6.6 kDa protein (59 aa).

The tract at residues 1–26 is disordered; sequence MRKWVRQAQVDAGARPGTTTEESAEI.

It belongs to the transposase 8 family.

This Mycobacterium tuberculosis protein is Insertion element IS986 uncharacterized 6.6 kDa protein.